The sequence spans 942 residues: Chitin synthase 2 (942 aa).

Over residues 1–13 (MAYHYSHDSDRRQ) the composition is skewed to basic and acidic residues. A disordered region spans residues 1–132 (MAYHYSHDSD…PSHTDYSDED (132 aa)). Low complexity predominate over residues 18 to 33 (YNYPSNYSNPSQYSIP). Asn23 is a glycosylation site (N-linked (GlcNAc...) asparagine). Polar residues predominate over residues 71–80 (PQPTASSMTS). An N-linked (GlcNAc...) asparagine glycan is attached at Asn587. The next 4 helical transmembrane spans lie at 590–610 (IFAATYAMVCFWRIWTSGHGI), 625–645 (FNLLFNWLSVSSFYLAFFFLI), 663–683 (IFQVFNKVYIALIFVVLVCSL), and 696–716 (FCIFMFAVCQGILLYCAGWTV). N-linked (GlcNAc...) asparagine glycosylation is present at Asn736. The next 2 helical transmembrane spans lie at 739–759 (FVQLALSLMATYGLYLISSLL) and 770–790 (FVQYLLLLPSYVNILLIYAMC). A glycan (N-linked (GlcNAc...) asparagine) is linked at Asn803. 2 consecutive transmembrane segments (helical) span residues 873 to 893 (VVLLFLGSNMLIILLFTSSTF) and 916 to 936 (IFYAVLGLSALRFAGCLLYLI).

It belongs to the chitin synthase family. Class III subfamily.

Its subcellular location is the cell membrane. The enzyme catalyses [(1-&gt;4)-N-acetyl-beta-D-glucosaminyl](n) + UDP-N-acetyl-alpha-D-glucosamine = [(1-&gt;4)-N-acetyl-beta-D-glucosaminyl](n+1) + UDP + H(+). Functionally, polymerizes chitin, a structural polymer of the cell wall and septum, by transferring the sugar moiety of UDP-GlcNAc to the non-reducing end of the growing chitin polymer. The chain is Chitin synthase 2 from Cryptococcus neoformans var. grubii serotype A (strain H99 / ATCC 208821 / CBS 10515 / FGSC 9487) (Filobasidiella neoformans var. grubii).